A 628-amino-acid chain; its full sequence is tRNA 5-methylaminomethyl-2-thiouridine biosynthesis bifunctional protein MnmC (628 aa).

Residues 1-237 (MSSYSPLVPP…KWHMTVGVRE (237 aa)) form a tRNA (mnm(5)s(2)U34)-methyltransferase region. The tract at residues 265-628 (VGGGLAGAGI…ADLLAAVAPR (364 aa)) is FAD-dependent cmnm(5)s(2)U34 oxidoreductase.

In the N-terminal section; belongs to the methyltransferase superfamily. tRNA (mnm(5)s(2)U34)-methyltransferase family. It in the C-terminal section; belongs to the DAO family. FAD serves as cofactor.

It is found in the cytoplasm. The catalysed reaction is 5-aminomethyl-2-thiouridine(34) in tRNA + S-adenosyl-L-methionine = 5-methylaminomethyl-2-thiouridine(34) in tRNA + S-adenosyl-L-homocysteine + H(+). Functionally, catalyzes the last two steps in the biosynthesis of 5-methylaminomethyl-2-thiouridine (mnm(5)s(2)U) at the wobble position (U34) in tRNA. Catalyzes the FAD-dependent demodification of cmnm(5)s(2)U34 to nm(5)s(2)U34, followed by the transfer of a methyl group from S-adenosyl-L-methionine to nm(5)s(2)U34, to form mnm(5)s(2)U34. The protein is tRNA 5-methylaminomethyl-2-thiouridine biosynthesis bifunctional protein MnmC of Bordetella petrii (strain ATCC BAA-461 / DSM 12804 / CCUG 43448).